We begin with the raw amino-acid sequence, 120 residues long: Small ribosomal subunit protein bS16 (120 aa).

The interval 81–120 (GLAKRPARNNPQKAEPGEKSKERAAKRAEKAAAPAEDAAA) is disordered. A compositionally biased stretch (basic and acidic residues) spans 95 to 110 (EPGEKSKERAAKRAEK). A compositionally biased stretch (low complexity) spans 111-120 (AAAPAEDAAA).

This sequence belongs to the bacterial ribosomal protein bS16 family.

This Methylorubrum populi (strain ATCC BAA-705 / NCIMB 13946 / BJ001) (Methylobacterium populi) protein is Small ribosomal subunit protein bS16.